We begin with the raw amino-acid sequence, 559 residues long: Putative protease Do-like 3, mitochondrial (559 aa).

Residues 1 to 48 (MSFLCVRTVSRFRSLSRALAPGFLLLHGNAVPKTAVFFRQQSSNTRLF) constitute a mitochondrion transit peptide. The tract at residues 59–81 (ENNSKSALKNKLPPGKEVSSKDA) is disordered. The interval 100–292 (VFTVSSKPRL…FLNAIEESGE (193 aa)) is serine protease. Active-site charge relay system residues include His138, Asp169, and Ser247. The region spanning 300-380 (NLTYQKMDND…HLVSMKKPCE (81 aa)) is the PDZ domain. Positions 538 to 559 (SEDLQPKQQNKRSKVPPKSKEH) are disordered. Residues 546–559 (QNKRSKVPPKSKEH) show a composition bias toward basic residues.

Belongs to the peptidase S1C family.

The protein resides in the mitochondrion matrix. Functionally, putative serine protease. The protein is Putative protease Do-like 3, mitochondrial (DEGP3) of Arabidopsis thaliana (Mouse-ear cress).